Reading from the N-terminus, the 377-residue chain is Cytochrome b (377 aa).

The next 4 helical transmembrane spans lie at 36 to 56 (WGSL…FLAM), 80 to 102 (WLIR…LHMA), 115 to 135 (VWLI…MGYI), and 181 to 201 (FFVL…IHLI). Residues H86 and H100 each contribute to the heme b site. Heme b contacts are provided by H185 and H199. H204 is a binding site for a ubiquinone. Transmembrane regions (helical) follow at residues 227–247 (YSSK…VIIF), 291–311 (LGGV…PFIS), 326–346 (LFWS…MPVV), and 354–374 (LTST…FLMI).

Belongs to the cytochrome b family. The main subunits of complex b-c1 are: cytochrome b, cytochrome c1 and the Rieske protein. Requires heme b as cofactor.

It is found in the mitochondrion inner membrane. Functionally, component of the ubiquinol-cytochrome c reductase complex (complex III or cytochrome b-c1 complex) that is part of the mitochondrial respiratory chain. The b-c1 complex mediates electron transfer from ubiquinol to cytochrome c. Contributes to the generation of a proton gradient across the mitochondrial membrane that is then used for ATP synthesis. The protein is Cytochrome b (mt:Cyt-b) of Myzostoma seymourcollegiorum (Polychaete worm).